Reading from the N-terminus, the 405-residue chain is GTPase Obg (405 aa).

Residues 1 to 159 enclose the Obg domain; the sequence is MRFIDEAVVT…KVLKFELKVV (159 aa). The region spanning 160–333 is the OBG-type G domain; that stretch reads ADVGLIGLPN…IKYHLMNEIE (174 aa). GTP contacts are provided by residues 166–173, 191–195, 213–216, 283–286, and 314–316; these read GLPNAGKS, FTTLV, DIPG, NKID, and ATL. The Mg(2+) site is built by S173 and T193. Over residues 371 to 382 the composition is skewed to basic and acidic residues; that stretch reads YRAARKAAREGT. A disordered region spans residues 371–405; sequence YRAARKAAREGTDLSDDDFDDSDDDDDGVEVVYAP. A compositionally biased stretch (acidic residues) spans 383 to 399; sequence DLSDDDFDDSDDDDDGV.

The protein belongs to the TRAFAC class OBG-HflX-like GTPase superfamily. OBG GTPase family. In terms of assembly, monomer. Mg(2+) is required as a cofactor.

It localises to the cytoplasm. Its function is as follows. An essential GTPase which binds GTP, GDP and possibly (p)ppGpp with moderate affinity, with high nucleotide exchange rates and a fairly low GTP hydrolysis rate. Plays a role in control of the cell cycle, stress response, ribosome biogenesis and in those bacteria that undergo differentiation, in morphogenesis control. This is GTPase Obg from Psychrobacter cryohalolentis (strain ATCC BAA-1226 / DSM 17306 / VKM B-2378 / K5).